A 29-amino-acid chain; its full sequence is Cyclotide vibi-A (29 aa).

Positions 1-29 (GLPVCGETCFGGTCNTPGCSCSYPICTRN) form a cross-link, cyclopeptide (Gly-Asn). Intrachain disulfides connect cysteine 5–cysteine 19, cysteine 9–cysteine 21, and cysteine 14–cysteine 26.

This is a cyclic peptide.

Probably participates in a plant defense mechanism. The protein is Cyclotide vibi-A of Viola biflora (Yellow wood violet).